We begin with the raw amino-acid sequence, 533 residues long: Zinc finger protein 692 (533 aa).

Disordered stretches follow at residues S124–L251 and T290–E310. A compositionally biased stretch (basic and acidic residues) spans E149–P178. A compositionally biased stretch (acidic residues) spans Q190–L208. S233 carries the phosphoserine modification. Polar residues predominate over residues T290 to N305. 5 C2H2-type zinc fingers span residues M329–H354, F360–H384, Y390–H412, L418–H440, and F449–H472. The residue at position 471 (S471) is a Phosphoserine. A disordered region spans residues V478 to S533. A compositionally biased stretch (low complexity) spans S481–S492. The span at P500–S521 shows a compositional bias: polar residues.

This sequence belongs to the krueppel C2H2-type zinc-finger protein family. In terms of processing, phosphorylation at Ser-471 results in loss of DNA-binding activity.

The protein resides in the nucleus. Functionally, may act as an transcriptional repressor for PCK1 gene expression, in turns may participate in the hepatic gluconeogenesis regulation through the activated AMPK signaling pathway. The protein is Zinc finger protein 692 of Rattus norvegicus (Rat).